Here is a 953-residue protein sequence, read N- to C-terminus: 26S proteasome non-ATPase regulatory subunit 1 (953 aa).

Met1 carries the N-acetylmethionine modification. Thr273 is modified (phosphothreonine). A disordered region spans residues 277–319 (SVPGSTNTGTVPGSEKDSDPMETEEKTASAVAGKTPDASPEPK). Ser290 carries the phosphoserine modification. A compositionally biased stretch (basic and acidic residues) spans 290 to 303 (SEKDSDPMETEEKT). N6-acetyllysine is present on Lys310. At Thr311 the chain carries Phosphothreonine. Ser315 bears the Phosphoserine mark. 10 PC repeats span residues 403–436 (TATA…PGSA), 441–474 (GGLY…DIVR), 476–510 (GGSL…VTGE), 511–545 (AAGL…EKIL), 547–580 (GLAV…ILRR), 581–616 (SGMY…DVRR), 617–649 (AAVE…PHVR), 651–685 (GAAM…YVRQ), 686–726 (GALI…DVMA), and 729–761 (GAIL…PSVV). An N6-acetyllysine modification is found at Lys720. Residue Thr830 is modified to Phosphothreonine. Ser834 carries the phosphoserine modification. Disordered regions lie at residues 839–881 (AKKK…LDNP) and 930–953 (AHGP…YIDD). Composition is skewed to basic and acidic residues over residues 842-852 (KEKEKEKKEEE) and 859-872 (AEKK…KEPE). Positions 936–953 (EEEEQEPEPPEPFEYIDD) are enriched in acidic residues.

The protein belongs to the proteasome subunit S1 family. Component of the 19S proteasome regulatory particle complex. The 26S proteasome consists of a 20S core particle (CP) and two 19S regulatory subunits (RP). The regulatory particle is made of a lid composed of 9 subunits, a base containing 6 ATPases and few additional components including PSMD1. Interacts with ADRM1. Interacts with ZFAND1.

Functionally, component of the 26S proteasome, a multiprotein complex involved in the ATP-dependent degradation of ubiquitinated proteins. This complex plays a key role in the maintenance of protein homeostasis by removing misfolded or damaged proteins, which could impair cellular functions, and by removing proteins whose functions are no longer required. Therefore, the proteasome participates in numerous cellular processes, including cell cycle progression, apoptosis, or DNA damage repair. This is 26S proteasome non-ATPase regulatory subunit 1 (Psmd1) from Mus musculus (Mouse).